A 438-amino-acid chain; its full sequence is Cobyrinate a,c-diamide synthase (438 aa).

The GATase cobBQ-type domain maps to 242-426 (TIAIARDAAF…FHAYFSSCPA (185 aa)). Residue cysteine 325 is the Nucleophile of the active site.

Belongs to the CobB/CbiA family. Mg(2+) is required as a cofactor.

The catalysed reaction is cob(II)yrinate + 2 L-glutamine + 2 ATP + 2 H2O = cob(II)yrinate a,c diamide + 2 L-glutamate + 2 ADP + 2 phosphate + 2 H(+). It functions in the pathway cofactor biosynthesis; adenosylcobalamin biosynthesis; cob(II)yrinate a,c-diamide from sirohydrochlorin (anaerobic route): step 10/10. Functionally, catalyzes the ATP-dependent amidation of the two carboxylate groups at positions a and c of cobyrinate, using either L-glutamine or ammonia as the nitrogen source. The sequence is that of Cobyrinate a,c-diamide synthase from Herminiimonas arsenicoxydans.